An 802-amino-acid polypeptide reads, in one-letter code: Neuronal PAS domain-containing protein 4 (802 aa).

The interval 1-13 (MYRSTKGASKARR) is basic motif; degenerate. The region spanning 1–53 (MYRSTKGASKARRDQINAEIRNLKELLPLAEADKVRLSYLHIMSLACIYTRKG) is the bHLH domain. The stretch at 5–38 (TKGASKARRDQINAEIRNLKELLPLAEADKVRLS) forms a coiled coil. Residues 14-53 (DQINAEIRNLKELLPLAEADKVRLSYLHIMSLACIYTRKG) form a helix-loop-helix motif region. PAS domains lie at 70–144 (SAQE…LDAD) and 203–275 (PGPG…LAEN). Residues 280-319 (AEMVVRLQAKHGGWTWIYCMLYSDGPEGPITANNYPISDT) form the PAC domain. Composition is skewed to polar residues over residues 472–495 (PSSA…SSAR), 502–518 (TPCT…STAT), and 527–555 (THEQ…QLSP). Residues 472–555 (PSSATFPDPL…SQTFPEQLSP (84 aa)) are disordered. Residues 624 to 648 (YTEKEQNEIDRLIQQISQLAQGMDR) are a coiled coil.

Efficient DNA binding requires dimerization with another bHLH protein. Heterodimer; forms a heterodimer with ARNT, ARNT2 or BMAL1. Post-translationally, ubiquitinated, leading to degradation by the proteosome. Specifically expressed in neurons. Expressed in the lateral nucleus of the amygdala (at protein level).

It localises to the nucleus. Functionally, transcription factor expressed in neurons of the brain that regulates the excitatory-inhibitory balance within neural circuits and is required for contextual memory in the hippocampus. Plays a key role in the structural and functional plasticity of neurons. Acts as an early-response transcription factor in both excitatory and inhibitory neurons, where it induces distinct but overlapping sets of late-response genes in these two types of neurons, allowing the synapses that form on inhibitory and excitatory neurons to be modified by neuronal activity in a manner specific to their function within a circuit, thereby facilitating appropriate circuit responses to sensory experience. In excitatory neurons, activates transcription of BDNF, which in turn controls the number of GABA-releasing synapses that form on excitatory neurons, thereby promoting an increased number of inhibitory synapses on excitatory neurons. In inhibitory neurons, regulates a distinct set of target genes that serve to increase excitatory input onto somatostatin neurons, probably resulting in enhanced feedback inhibition within cortical circuits. The excitatory and inhibitory balance in neurons affects a number of processes, such as short-term and long-term memory, acquisition of experience, fear memory, response to stress and social behavior. Acts as a regulator of dendritic spine development in olfactory bulb granule cells in a sensory-experience-dependent manner by regulating expression of MDM2. Efficient DNA binding requires dimerization with another bHLH protein, such as ARNT, ARNT2 or BMAL1. Can activate the CME (CNS midline enhancer) element. The sequence is that of Neuronal PAS domain-containing protein 4 from Rattus norvegicus (Rat).